The chain runs to 257 residues: uncharacterized protein (257 aa).

A helical transmembrane segment spans residues Ile-6 to Phe-26.

This sequence belongs to the staphylococcal tandem lipoprotein family.

The protein resides in the cell membrane. This is an uncharacterized protein from Staphylococcus aureus (strain N315).